Consider the following 158-residue polypeptide: Retinoic acid receptor beta (158 aa).

The segment covering 1–18 (RHSAQSIETQSTSSEELV) has biased composition (low complexity). Residues 1 to 24 (RHSAQSIETQSTSSEELVPSPPSP) form a disordered region. Positions 31–106 (YKPCFVCQDK…VGMSKESVRN (76 aa)) form a DNA-binding region, nuclear receptor. NR C4-type zinc fingers lie at residues 34-54 (CFVCQDKSSGYHYGVSACEGC) and 70-94 (CHRDKNCVINKVTRNRCQYCRLQRC). An NR LBD domain is found at 129–158 (ELDDLTEKIRKAHQETFPSLCQLGKYTTNS).

This sequence belongs to the nuclear hormone receptor family. NR1 subfamily. Heterodimer; with a RXR molecule. Binds DNA preferentially as a RAR/RXR heterodimer.

It is found in the nucleus. In terms of biological role, receptor for retinoic acid. Retinoic acid receptors bind as heterodimers to their target response elements in response to their ligands, all-trans or 9-cis retinoic acid, and regulate gene expression in various biological processes. The RAR/RXR heterodimers bind to the retinoic acid response elements (RARE) composed of tandem 5'-AGGTCA-3' sites known as DR1-DR5. This Notophthalmus viridescens (Eastern newt) protein is Retinoic acid receptor beta (RARB).